A 219-amino-acid polypeptide reads, in one-letter code: ATP synthase F(0) complex subunit a (219 aa).

The next 6 helical transmembrane spans lie at 4–24, 61–81, 90–110, 124–144, 172–192, and 194–214; these read PTYL…ILFP, WAAL…LGLL, QLSL…IIGM, EGTP…SLFI, FVLL…LFLL, and LLEI…LSLY.

This sequence belongs to the ATPase A chain family. In terms of assembly, component of the ATP synthase complex composed at least of ATP5F1A/subunit alpha, ATP5F1B/subunit beta, ATP5MC1/subunit c (homooctomer), MT-ATP6/subunit a, MT-ATP8/subunit 8, ATP5ME/subunit e, ATP5MF/subunit f, ATP5MG/subunit g, ATP5MK/subunit k, ATP5MJ/subunit j, ATP5F1C/subunit gamma, ATP5F1D/subunit delta, ATP5F1E/subunit epsilon, ATP5PF/subunit F6, ATP5PB/subunit b, ATP5PD/subunit d, ATP5PO/subunit OSCP. ATP synthase complex consists of a soluble F(1) head domain (subunits alpha(3) and beta(3)) - the catalytic core - and a membrane F(0) domain - the membrane proton channel (subunits c, a, 8, e, f, g, k and j). These two domains are linked by a central stalk (subunits gamma, delta, and epsilon) rotating inside the F1 region and a stationary peripheral stalk (subunits F6, b, d, and OSCP). Interacts with DNAJC30; interaction is direct.

It is found in the mitochondrion inner membrane. It catalyses the reaction H(+)(in) = H(+)(out). Subunit a, of the mitochondrial membrane ATP synthase complex (F(1)F(0) ATP synthase or Complex V) that produces ATP from ADP in the presence of a proton gradient across the membrane which is generated by electron transport complexes of the respiratory chain. ATP synthase complex consist of a soluble F(1) head domain - the catalytic core - and a membrane F(1) domain - the membrane proton channel. These two domains are linked by a central stalk rotating inside the F(1) region and a stationary peripheral stalk. During catalysis, ATP synthesis in the catalytic domain of F(1) is coupled via a rotary mechanism of the central stalk subunits to proton translocation. With the subunit c (ATP5MC1), forms the proton-conducting channel in the F(0) domain, that contains two crucial half-channels (inlet and outlet) that facilitate proton movement from the mitochondrial intermembrane space (IMS) into the matrix. Protons are taken up via the inlet half-channel and released through the outlet half-channel, following a Grotthuss mechanism. This Oncorhynchus masou (Cherry salmon) protein is ATP synthase F(0) complex subunit a.